The sequence spans 152 residues: Endoribonuclease YbeY (152 aa).

3 residues coordinate Zn(2+): His-113, His-117, and His-123.

It belongs to the endoribonuclease YbeY family. Zn(2+) serves as cofactor.

The protein resides in the cytoplasm. In terms of biological role, single strand-specific metallo-endoribonuclease involved in late-stage 70S ribosome quality control and in maturation of the 3' terminus of the 16S rRNA. This Acidovorax sp. (strain JS42) protein is Endoribonuclease YbeY.